A 64-amino-acid polypeptide reads, in one-letter code: Neuropeptide-like 4 (64 aa).

An N-terminal signal peptide occupies residues 1–18; that stretch reads MFKLLVVVFAALFAAALA. Propeptides lie at residues 19-40 and 63-64; these read VPAPVARANPAPIPIASPEPAP and YG.

It is found in the secreted. The chain is Neuropeptide-like 4 (Nplp4) from Drosophila melanogaster (Fruit fly).